The following is a 548-amino-acid chain: Probable bifunctional tRNA threonylcarbamoyladenosine biosynthesis protein (548 aa).

Positions 1-338 are kae1; sequence MRILGIEGTA…FRPDEVAVTW (338 aa). Residues His-122 and His-126 each contribute to the Fe cation site. Residues 143–147, Asp-175, Gly-188, Glu-192, and Asn-271 contribute to the L-threonylcarbamoyladenylate site; that span reads NASGA. Residue Asp-299 coordinates Fe cation. Residues 349-548 enclose the Protein kinase domain; sequence RMGGDEVQGA…DDIEGRGRYQ (200 aa). ATP is bound by residues 355–362 and Lys-371; that span reads VQGAEATV. Residues 390 to 404 are compositionally biased toward basic and acidic residues; sequence ERTRQEARLTSEARR. The disordered stretch occupies residues 390–413; the sequence is ERTRQEARLTSEARRNGVPTPLVR. The active-site Proton acceptor; for kinase activity is the Asp-460.

It in the N-terminal section; belongs to the KAE1 / TsaD family. The protein in the C-terminal section; belongs to the protein kinase superfamily. Tyr protein kinase family. BUD32 subfamily. In terms of assembly, component of the KEOPS complex that consists of Kae1, Bud32, Cgi121 and Pcc1; the whole complex dimerizes. It depends on Fe(2+) as a cofactor.

It localises to the cytoplasm. It catalyses the reaction L-seryl-[protein] + ATP = O-phospho-L-seryl-[protein] + ADP + H(+). The enzyme catalyses L-threonyl-[protein] + ATP = O-phospho-L-threonyl-[protein] + ADP + H(+). It carries out the reaction L-threonylcarbamoyladenylate + adenosine(37) in tRNA = N(6)-L-threonylcarbamoyladenosine(37) in tRNA + AMP + H(+). Required for the formation of a threonylcarbamoyl group on adenosine at position 37 (t(6)A37) in tRNAs that read codons beginning with adenine. Is a component of the KEOPS complex that is probably involved in the transfer of the threonylcarbamoyl moiety of threonylcarbamoyl-AMP (TC-AMP) to the N6 group of A37. The Kae1 domain likely plays a direct catalytic role in this reaction. The Bud32 domain probably displays kinase activity that regulates Kae1 function. This Haloarcula marismortui (strain ATCC 43049 / DSM 3752 / JCM 8966 / VKM B-1809) (Halobacterium marismortui) protein is Probable bifunctional tRNA threonylcarbamoyladenosine biosynthesis protein.